The chain runs to 1409 residues: DNA-directed RNA polymerase subunit beta' (1409 aa).

Cysteine 70, cysteine 72, cysteine 85, and cysteine 88 together coordinate Zn(2+). The Mg(2+) site is built by aspartate 461, aspartate 463, and aspartate 465. Zn(2+)-binding residues include cysteine 833, cysteine 907, cysteine 914, and cysteine 917. Residues glutamate 1389–alanine 1409 form a disordered region.

The protein belongs to the RNA polymerase beta' chain family. The RNAP catalytic core consists of 2 alpha, 1 beta, 1 beta' and 1 omega subunit. When a sigma factor is associated with the core the holoenzyme is formed, which can initiate transcription. Mg(2+) serves as cofactor. Requires Zn(2+) as cofactor.

The enzyme catalyses RNA(n) + a ribonucleoside 5'-triphosphate = RNA(n+1) + diphosphate. DNA-dependent RNA polymerase catalyzes the transcription of DNA into RNA using the four ribonucleoside triphosphates as substrates. The protein is DNA-directed RNA polymerase subunit beta' of Pelobacter propionicus (strain DSM 2379 / NBRC 103807 / OttBd1).